The primary structure comprises 428 residues: Adenylosuccinate synthetase (428 aa).

Residues 11–17 (GDEGKGK) and 39–41 (GHT) each bind GTP. The Proton acceptor role is filled by Asp12. Positions 12 and 39 each coordinate Mg(2+). Residues 12-15 (DEGK), 37-40 (NAGH), Thr130, Arg144, Asn226, Thr241, and Arg305 contribute to the IMP site. The active-site Proton donor is His40. 301-307 (VTTGRKR) contributes to the substrate binding site. Residues Arg307, 333 to 335 (KLD), and 415 to 417 (GTG) each bind GTP.

The protein belongs to the adenylosuccinate synthetase family. Homodimer. Requires Mg(2+) as cofactor.

The protein resides in the cytoplasm. The catalysed reaction is IMP + L-aspartate + GTP = N(6)-(1,2-dicarboxyethyl)-AMP + GDP + phosphate + 2 H(+). The protein operates within purine metabolism; AMP biosynthesis via de novo pathway; AMP from IMP: step 1/2. Its function is as follows. Plays an important role in the de novo pathway and in the salvage pathway of purine nucleotide biosynthesis. Catalyzes the first committed step in the biosynthesis of AMP from IMP. The sequence is that of Adenylosuccinate synthetase from Candida dubliniensis (strain CD36 / ATCC MYA-646 / CBS 7987 / NCPF 3949 / NRRL Y-17841) (Yeast).